The sequence spans 403 residues: Pantothenate kinase (403 aa).

Serine 80, serine 82, and serine 84 each carry phosphoserine.

The protein belongs to the type II pantothenate kinase family.

Its subcellular location is the cytoplasm. It is found in the nucleus. The catalysed reaction is (R)-pantothenate + ATP = (R)-4'-phosphopantothenate + ADP + H(+). The protein operates within cofactor biosynthesis; coenzyme A biosynthesis; CoA from (R)-pantothenate: step 1/5. Its activity is regulated as follows. Regulated by feedback inhibition by malonyl-CoA. In terms of biological role, plays a role in the physiological regulation of the intracellular CoA concentration. The chain is Pantothenate kinase from Schizosaccharomyces pombe (strain 972 / ATCC 24843) (Fission yeast).